The following is a 186-amino-acid chain: UPF0200 protein PH1008 (186 aa).

7 to 14 (GMPGSGKG) contributes to the ATP binding site.

The protein belongs to the UPF0200 family.

This is UPF0200 protein PH1008 from Pyrococcus horikoshii (strain ATCC 700860 / DSM 12428 / JCM 9974 / NBRC 100139 / OT-3).